A 1062-amino-acid polypeptide reads, in one-letter code: Roc-COR-CHAT protease (1062 aa).

LRR repeat units lie at residues 70–94, 95–116, 115–141, 142–159, 160–180, 181–203, 204–226, and 228–249; these read LAGL…HLQQ, LRLL…GSMP, MPLL…ALQK, LDVS…SACP, ALWW…MPAG, FKAL…NGKL, PKLV…LLLP, and GLET…IRGS. Positions 470 to 660 constitute a COR domain; that stretch reads DWLGVMEELQ…GLMWKDNVVF (191 aa). Positions 836–856 are disordered; the sequence is ERDNDHTGLSDSSDQEDETFT. Active-site residues include His931 and Cys980.

Functionally, a dedicated protease for substrate gasdermin bGSDM; cleaves the bGSDM precursor, releasing the pore-forming moiety, which integrates into the membrane and triggers cell death. Probably involved in defense against bacteriophages. Expression of bGSDM and this neighboring protease is highly toxic in E.coli. In Unknown prokaryotic organism, this protein is Roc-COR-CHAT protease.